A 317-amino-acid chain; its full sequence is Ribonuclease Z (317 aa).

Positions 61, 63, 65, 66, 139, 210, and 268 each coordinate Zn(2+). D65 (proton acceptor) is an active-site residue.

It belongs to the RNase Z family. Homodimer. Zn(2+) serves as cofactor.

It carries out the reaction Endonucleolytic cleavage of RNA, removing extra 3' nucleotides from tRNA precursor, generating 3' termini of tRNAs. A 3'-hydroxy group is left at the tRNA terminus and a 5'-phosphoryl group is left at the trailer molecule.. With respect to regulation, inhibited by high salt concentrations. In terms of biological role, zinc phosphodiesterase, which displays some tRNA 3'-processing endonuclease activity. Probably involved in tRNA maturation, by removing a 3'-trailer from precursor tRNA. Can also catalyze the 5' end cleavage of the 5S rRNA. This is Ribonuclease Z from Haloferax volcanii (strain ATCC 29605 / DSM 3757 / JCM 8879 / NBRC 14742 / NCIMB 2012 / VKM B-1768 / DS2) (Halobacterium volcanii).